A 324-amino-acid polypeptide reads, in one-letter code: Methenyltetrahydromethanopterin cyclohydrolase (324 aa).

It belongs to the MCH family.

It localises to the cytoplasm. It catalyses the reaction 5,10-methenyl-5,6,7,8-tetrahydromethanopterin + H2O = N(5)-formyl-5,6,7,8-tetrahydromethanopterin + H(+). It functions in the pathway one-carbon metabolism; methanogenesis from CO(2); 5,10-methenyl-5,6,7,8-tetrahydromethanopterin from CO(2): step 3/3. In terms of biological role, catalyzes the reversible interconversion of 5-formyl-H(4)MPT to methenyl-H(4)MPT(+). This chain is Methenyltetrahydromethanopterin cyclohydrolase, found in Methanococcus aeolicus (strain ATCC BAA-1280 / DSM 17508 / OCM 812 / Nankai-3).